We begin with the raw amino-acid sequence, 80 residues long: Serine rich endogenous peptide 15 (80 aa).

The signal sequence occupies residues 1 to 28 (MSKEKSYVIALLLSLLLCLSFQVGVSEA). Short sequence motifs (SCOOP motif) lie at residues 32 to 46 (AVTT…CANG) and 66 to 80 (PRVA…GKGP). Residues 37–80 (YSDSPRCANGSSASPPTRHCPRGRPRPPTPRVAVHSNSTKGKGP) are disordered. 2 short sequence motifs (sxS motif essential for MIK2 binding) span residues 38-40 (SDS) and 72-74 (SNS). Over residues 71-80 (HSNSTKGKGP) the composition is skewed to polar residues.

It belongs to the serine rich endogenous peptide (SCOOP) phytocytokine family. As to quaternary structure, interacts with MIK2 (via extracellular leucine-rich repeat domain); this interaction triggers the formation of complex between MIK2 and the BAK1/SERK3 and SERK4 coreceptors, and subsequent BAK1 activation by phosphorylation. As to expression, mostly expressed in leaves, and, to a lower extent, in seedlings shoots, roots, stems, siliques, seeds and flowers.

Its subcellular location is the cell membrane. The protein resides in the secreted. It is found in the extracellular space. The protein localises to the apoplast. It localises to the endoplasmic reticulum. Its subcellular location is the golgi apparatus. Brassicaceae-specific phytocytokine (plant endogenous peptide released into the apoplast) perceived by MIK2 in a BAK1/SERK3 and SERK4 coreceptors-dependent manner, that modulates various physiological and antimicrobial processes including growth prevention and reactive oxygen species (ROS) response regulation. Inhibits root growth. The chain is Serine rich endogenous peptide 15 from Arabidopsis thaliana (Mouse-ear cress).